The sequence spans 77 residues: Sec-independent protein translocase protein TatA (77 aa).

A helical transmembrane segment spans residues 1-21 (MGSFSIWHWLIVLVIVMLVFG). Residues 46–77 (GEGKAAADPAQSKELRDSTTIDVEAKEKTRQQ) form a disordered region.

The protein belongs to the TatA/E family. In terms of assembly, the Tat system comprises two distinct complexes: a TatABC complex, containing multiple copies of TatA, TatB and TatC subunits, and a separate TatA complex, containing only TatA subunits. Substrates initially bind to the TatABC complex, which probably triggers association of the separate TatA complex to form the active translocon.

Its subcellular location is the cell inner membrane. Its function is as follows. Part of the twin-arginine translocation (Tat) system that transports large folded proteins containing a characteristic twin-arginine motif in their signal peptide across membranes. TatA could form the protein-conducting channel of the Tat system. The polypeptide is Sec-independent protein translocase protein TatA (Cupriavidus necator (strain ATCC 17699 / DSM 428 / KCTC 22496 / NCIMB 10442 / H16 / Stanier 337) (Ralstonia eutropha)).